Reading from the N-terminus, the 132-residue chain is Agouti-signaling protein (132 aa).

An N-terminal signal peptide occupies residues 1 to 22 (MDVTRLLLATLLVFLCFFTVYS). Asn39 carries N-linked (GlcNAc...) asparagine glycosylation. The disordered stretch occupies residues 62-93 (ISRKEAEKKRSSKKEASMKKVAQPRTPLSAPC). Positions 63-79 (SRKEAEKKRSSKKEASM) are enriched in basic and acidic residues. Disulfide bonds link Cys93–Cys108, Cys100–Cys114, Cys107–Cys125, Cys111–Cys132, and Cys116–Cys123. Positions 93–132 (CVATRDSCKPPAPACCDPCASCQCRFFRSACSCRVLSLNC) constitute an Agouti domain.

The protein localises to the secreted. Functionally, involved in the regulation of melanogenesis. The binding of ASP to MC1R precludes alpha-MSH initiated signaling and thus blocks production of cAMP, leading to a down-regulation of eumelanogenesis (brown/black pigment) and thus increasing synthesis of pheomelanin (yellow/red pigment). The polypeptide is Agouti-signaling protein (ASIP) (Trachypithecus auratus (Javan langur)).